A 270-amino-acid polypeptide reads, in one-letter code: Putative carboxymethylenebutenolidase (270 aa).

Residues Cys147, Asp204, and His236 contribute to the active site.

This sequence belongs to the dienelactone hydrolase family.

The enzyme catalyses 2-(5-oxo-2,5-dihydrofuran-2-ylidene)acetate + H2O = 4-oxohex-2-enedioate + H(+). The protein is Putative carboxymethylenebutenolidase (ysgA) of Salmonella typhi.